The sequence spans 329 residues: Phosphate import ATP-binding protein PstB (329 aa).

The region spanning Phe-83–Ile-325 is the ABC transporter domain. An ATP-binding site is contributed by Gly-116 to Ser-123.

Belongs to the ABC transporter superfamily. Phosphate importer (TC 3.A.1.7) family. As to quaternary structure, the complex is composed of two ATP-binding proteins (PstB), two transmembrane proteins (PstC and PstA) and a solute-binding protein (PstS).

It is found in the cell membrane. The catalysed reaction is phosphate(out) + ATP + H2O = ADP + 2 phosphate(in) + H(+). Its function is as follows. Part of the ABC transporter complex PstSACB involved in phosphate import. Responsible for energy coupling to the transport system. This chain is Phosphate import ATP-binding protein PstB, found in Mycoplasma pneumoniae (strain ATCC 29342 / M129 / Subtype 1) (Mycoplasmoides pneumoniae).